The following is an 895-amino-acid chain: Transcription factor SWI6 (895 aa).

Residues 1–45 are compositionally biased toward polar residues; that stretch reads MASTVAGNSFVSQQHPGNLHSANLQSQSQGFRRQNSTSSVPSTAS. Residues 1-107 form a disordered region; that stretch reads MASTVAGNSF…SDQNVPQQPQ (107 aa). Positions 64–100 are enriched in low complexity; sequence MSSQQSQPPASQQSFSMSQTGSQPQPSQSSFRSYSDQ. An HTH APSES-type domain is found at 112–219; that stretch reads IYTAVYSNVE…NRNPDGSVSQ (108 aa). A DNA-binding region (H-T-H motif) is located at residues 143–164; the sequence is ATQILKVAGVEKGKRTKILEKE. Disordered regions lie at residues 272-293 and 323-358; these read ARFD…SFQR and NMAF…NSFG. ANK repeat units follow at residues 458–488 and 607–636; these read QCHT…PFRV and AGDT…SPHI. The disordered stretch occupies residues 653–684; it reads SDGAMKTKGDSGGDVENGDVGGSSQKSNESSN. Polar residues predominate over residues 674-684; sequence GSSQKSNESSN. A coiled-coil region spans residues 698-759; sequence SANFQEEIKN…VTNLQRAEER (62 aa).

The protein localises to the nucleus. Its function is as follows. Transcription factor that plays a role downstream of the MCK1-MKK2-MPS1 cascade. Required for hyphal morphogenesis and pathogenicity. Is an important oxidative stress response regulator and plays a positive role in the regulation of extracellular peroxidases. The polypeptide is Transcription factor SWI6 (Pyricularia oryzae (strain 70-15 / ATCC MYA-4617 / FGSC 8958) (Rice blast fungus)).